Reading from the N-terminus, the 261-residue chain is Ethanolamine ammonia-lyase small subunit (261 aa).

Adenosylcob(III)alamin contacts are provided by valine 157, glutamate 178, and cysteine 207.

It belongs to the EutC family. In terms of assembly, the basic unit is a heterodimer which dimerizes to form tetramers. The heterotetramers trimerize; 6 large subunits form a core ring with 6 small subunits projecting outwards. The cofactor is adenosylcob(III)alamin.

Its subcellular location is the bacterial microcompartment. The enzyme catalyses ethanolamine = acetaldehyde + NH4(+). The protein operates within amine and polyamine degradation; ethanolamine degradation. Functionally, catalyzes the deamination of various vicinal amino-alcohols to oxo compounds. Allows this organism to utilize ethanolamine as the sole source of nitrogen and carbon in the presence of external vitamin B12. This is Ethanolamine ammonia-lyase small subunit from Rhodopseudomonas palustris (strain BisA53).